We begin with the raw amino-acid sequence, 455 residues long: Membrane-bound lytic murein transglycosylase F (455 aa).

The first 21 residues, 1-21 (MPKSAVSLFAILLLAASVITA), serve as a signal peptide directing secretion. The segment at 22 to 264 (CSPQTRPDAM…HIKEQHFGHV (243 aa)) is non-LT domain. The LT domain stretch occupies residues 265–455 (KQFNYVTTSL…LKYLDEQGRL (191 aa)). Glutamate 309 is an active-site residue.

In the N-terminal section; belongs to the bacterial solute-binding protein 3 family. It in the C-terminal section; belongs to the transglycosylase Slt family.

Its subcellular location is the cell outer membrane. It carries out the reaction Exolytic cleavage of the (1-&gt;4)-beta-glycosidic linkage between N-acetylmuramic acid (MurNAc) and N-acetylglucosamine (GlcNAc) residues in peptidoglycan, from either the reducing or the non-reducing ends of the peptidoglycan chains, with concomitant formation of a 1,6-anhydrobond in the MurNAc residue.. Functionally, murein-degrading enzyme that degrades murein glycan strands and insoluble, high-molecular weight murein sacculi, with the concomitant formation of a 1,6-anhydromuramoyl product. Lytic transglycosylases (LTs) play an integral role in the metabolism of the peptidoglycan (PG) sacculus. Their lytic action creates space within the PG sacculus to allow for its expansion as well as for the insertion of various structures such as secretion systems and flagella. The polypeptide is Membrane-bound lytic murein transglycosylase F (Idiomarina loihiensis (strain ATCC BAA-735 / DSM 15497 / L2-TR)).